The sequence spans 143 residues: MKHVEIFTDGACKGNPGKGGWGALLRMGEHEKEMAGSEKETTNNRMELMAAIRALEALKQPCRVTLHTDSKYVLDGITKWIFGWQKKGWKTADNKPVKNEDLWRALVDAVRPHKVEWVWVKGHDGHPENERVDKLASDAALAA.

Residues 1-141 (MKHVEIFTDG…VDKLASDAAL (141 aa)) form the RNase H type-1 domain. 4 residues coordinate Mg(2+): aspartate 9, glutamate 47, aspartate 69, and aspartate 133.

This sequence belongs to the RNase H family. Monomer. The cofactor is Mg(2+).

The protein resides in the cytoplasm. It carries out the reaction Endonucleolytic cleavage to 5'-phosphomonoester.. In terms of biological role, endonuclease that specifically degrades the RNA of RNA-DNA hybrids. This is Ribonuclease H from Novosphingobium aromaticivorans (strain ATCC 700278 / DSM 12444 / CCUG 56034 / CIP 105152 / NBRC 16084 / F199).